Consider the following 213-residue polypeptide: Phosphoribosyl-dephospho-CoA transferase (213 aa).

Residues D135 and D137 contribute to the active site.

It belongs to the MdcG family.

The catalysed reaction is apo-[malonate decarboxylase ACP] + 2'-(5''-triphospho-alpha-D-ribosyl)-3'-dephospho-CoA = holo-[malonate decarboxylase ACP] + diphosphate. Transfers 2'-(5-triphosphoribosyl)-3'-dephosphocoenzyme-A to the apo-[acyl-carrier-protein] of the malonate decarboxylase to yield holo-[acyl-carrier-protein]. This is Phosphoribosyl-dephospho-CoA transferase from Xanthomonas axonopodis pv. citri (strain 306).